A 211-amino-acid polypeptide reads, in one-letter code: uncharacterized protein (211 aa).

The disordered stretch occupies residues 1–43; the sequence is MRPEVGREPAALQPRQRPRSDHQLHRSPFTVPPRTPACRSPGP.

This is an uncharacterized protein from Homo sapiens (Human).